Here is a 249-residue protein sequence, read N- to C-terminus: 5'-nucleotidase SurE (249 aa).

Residues Asp-8, Asp-9, Ser-39, and Asn-91 each contribute to the a divalent metal cation site.

This sequence belongs to the SurE nucleotidase family. A divalent metal cation serves as cofactor.

It localises to the cytoplasm. The enzyme catalyses a ribonucleoside 5'-phosphate + H2O = a ribonucleoside + phosphate. Functionally, nucleotidase that shows phosphatase activity on nucleoside 5'-monophosphates. In Pseudomonas putida (strain ATCC 700007 / DSM 6899 / JCM 31910 / BCRC 17059 / LMG 24140 / F1), this protein is 5'-nucleotidase SurE.